The sequence spans 64 residues: Large ribosomal subunit protein bL35 (64 aa).

A compositionally biased stretch (basic residues) spans 1 to 45 (MPKMKTHKGAAKRFKKTGKGKIKRRKAFKSHILTKKTPKRKRNLR). The tract at residues 1-64 (MPKMKTHKGA…EEKRIKRLLP (64 aa)) is disordered.

This sequence belongs to the bacterial ribosomal protein bL35 family.

This Natranaerobius thermophilus (strain ATCC BAA-1301 / DSM 18059 / JW/NM-WN-LF) protein is Large ribosomal subunit protein bL35.